Reading from the N-terminus, the 314-residue chain is Methionyl-tRNA formyltransferase (314 aa).

112–115 (SLLP) lines the (6S)-5,6,7,8-tetrahydrofolate pocket.

Belongs to the Fmt family.

The enzyme catalyses L-methionyl-tRNA(fMet) + (6R)-10-formyltetrahydrofolate = N-formyl-L-methionyl-tRNA(fMet) + (6S)-5,6,7,8-tetrahydrofolate + H(+). Functionally, attaches a formyl group to the free amino group of methionyl-tRNA(fMet). The formyl group appears to play a dual role in the initiator identity of N-formylmethionyl-tRNA by promoting its recognition by IF2 and preventing the misappropriation of this tRNA by the elongation apparatus. This Tolumonas auensis (strain DSM 9187 / NBRC 110442 / TA 4) protein is Methionyl-tRNA formyltransferase.